A 185-amino-acid chain; its full sequence is Elongation factor P (185 aa).

It belongs to the elongation factor P family.

The protein localises to the cytoplasm. It functions in the pathway protein biosynthesis; polypeptide chain elongation. Functionally, involved in peptide bond synthesis. Stimulates efficient translation and peptide-bond synthesis on native or reconstituted 70S ribosomes in vitro. Probably functions indirectly by altering the affinity of the ribosome for aminoacyl-tRNA, thus increasing their reactivity as acceptors for peptidyl transferase. In Acaryochloris marina (strain MBIC 11017), this protein is Elongation factor P.